Here is a 284-residue protein sequence, read N- to C-terminus: RNase adapter protein RapZ (284 aa).

8 to 15 (GRSGSGKS) lines the ATP pocket. GTP is bound at residue 56 to 59 (DVRN). An RNA-binding region spans residues 266 to 284 (RSRGKNVQSRHRTLEKRKT).

The protein belongs to the RapZ-like family. RapZ subfamily. As to quaternary structure, homotrimer.

Modulates the synthesis of GlmS, by affecting the processing and stability of the regulatory small RNA GlmZ. When glucosamine-6-phosphate (GlcN6P) concentrations are high in the cell, RapZ binds GlmZ and targets it to cleavage by RNase E. Consequently, GlmZ is inactivated and unable to activate GlmS synthesis. Under low GlcN6P concentrations, RapZ is sequestered and inactivated by an other regulatory small RNA, GlmY, preventing GlmZ degradation and leading to synthesis of GlmS. The protein is RNase adapter protein RapZ of Salmonella typhimurium (strain LT2 / SGSC1412 / ATCC 700720).